The chain runs to 548 residues: DNA ligase (548 aa).

An ATP-binding site is contributed by Glu-244. The active-site N6-AMP-lysine intermediate is Lys-246. 6 residues coordinate ATP: Arg-251, Arg-266, Glu-295, Phe-334, Arg-405, and Lys-411.

It belongs to the ATP-dependent DNA ligase family. Mg(2+) is required as a cofactor.

It carries out the reaction ATP + (deoxyribonucleotide)n-3'-hydroxyl + 5'-phospho-(deoxyribonucleotide)m = (deoxyribonucleotide)n+m + AMP + diphosphate.. Functionally, DNA ligase that seals nicks in double-stranded DNA during DNA replication, DNA recombination and DNA repair. The polypeptide is DNA ligase (Methanoculleus marisnigri (strain ATCC 35101 / DSM 1498 / JR1)).